Reading from the N-terminus, the 971-residue chain is Nuclear factor NF-kappa-B p105 subunit (971 aa).

The RHD domain occupies 40 to 365 (PYLQILEQPK…EVQRKRQKLM (326 aa)). Cys59 is modified (S-nitrosocysteine; alternate). A lipid anchor (S-(15-deoxy-Delta12,14-prostaglandin J2-9-yl)cysteine; alternate) is attached at Cys59. Residue Lys323 forms a Glycyl lysine isopeptide (Lys-Gly) (interchain with G-Cter in SUMO2) linkage. The residue at position 335 (Ser335) is a Phosphoserine; by PKA. Residues 358 to 363 (QRKRQK) carry the Nuclear localization signal motif. Positions 370–392 (DSFGGGSGAGAGGGGMFGSGGGG) are GRR. The interval 433–971 (INTKFKNGPK…GQEGPIEGKI (539 aa)) is interaction with CFLAR. Residue Lys438 is modified to N6-acetyllysine; by EP300. The segment at 439-470 (NGPKDCAKSDDEESLTLPEKETEGEGPSLPMA) is disordered. A Phosphoserine modification is found at Ser447. ANK repeat units follow at residues 538–567 (NGDS…GLIS), 577–606 (LYQT…DLSL), 610–639 (WGNS…AAPL), 646–675 (EGLN…EVNA), 680–710 (SGRT…HVDS), and 714–743 (DGTT…DPLV). The segment at 646-680 (EGLNAIHIAVMSNSLPCLLLLVAAGAEVNAQEQKS) is essential for interaction with HIF1AN. Asn674 carries the post-translational modification (3S)-3-hydroxyasparagine; by HIF1AN. Position 755 is a phosphoserine (Ser755). One copy of the ANK 7 repeat lies at 767–797 (PGTTPLDMAANWQVFDILNGKPYEPVFTSDD). A Death domain is found at 801 to 888 (QGDMKQLTED…EAIEVIQAAF (88 aa)). Ser896 carries the phosphoserine modification. Residue Ser910 is modified to Phosphoserine; by GSK3-beta; in vitro. Phosphoserine is present on Ser926. 2 positions are modified to phosphoserine; by IKKB: Ser930 and Ser935. Ser940 carries the post-translational modification Phosphoserine. Thr946 is subject to Phosphothreonine.

Component of the NF-kappa-B p65-p50 complex. Homodimer; component of the NF-kappa-B p50-p50 complex. Component of the NF-kappa-B p105-p50 complex. Component of the NF-kappa-B p50-c-Rel complex. Component of a complex consisting of the NF-kappa-B p50-p50 homodimer and BCL3. Also interacts with MAP3K8. NF-kappa-B p50 subunit interacts with NCOA3 coactivator, which may coactivate NF-kappa-B dependent expression via its histone acetyltransferase activity. Interacts with TSC22D3; this interaction prevents nuclear translocation and DNA-binding. Interacts with SPAG9 and UNC5CL. NFKB1/p105 interacts with CFLAR; the interaction inhibits p105 processing into p50. NFKB1/p105 forms a ternary complex with MAP3K8 and TNIP2. Interacts with GSK3B; the interaction prevents processing of p105 to p50. NFKB1/p50 interacts with NFKBIE. NFKB1/p50 interacts with NFKBIZ. Nuclear factor NF-kappa-B p50 subunit interacts with NFKBID. Directly interacts with MEN1. Interacts with HIF1AN. Interacts with FEM1AA; interaction is direct. In terms of processing, generation of the NF-kappa-B p50 (Nuclear factor NF-kappa-B p50 subunit) transcription factor takes place both cotranslationally and post-translationally via non-mutually exclusive mechanisms. A cotranslational processing allows the production of both p50 and p105 (Nuclear factor NF-kappa-B p105 subunit) from a single NFKB1 mRNA. While translation occurs, the particular unfolded structure after the GRR repeat region acts as a substrate for the proteasome, promoting degradation of the C-terminus. The GRR acts as a proteasomal 'stop signal', protecting the region upstream of the GRR from degradation and promoting generation of p50. It is unclear if limited proteasome degradation during cotranslational processing depends on ubiquitination. NF-kappa-B p50 is also generated post-translationally following ubiquitination by the KPC complex, leading to limited processing by the proteasome downstream of the GRR region, thereby generating p50. Phosphorylation at the C-terminus by IKBKB/IKKB acts as a signal for ubiquitination and promotes either complete degradation or processing to generate the NF-kappa-B p50 (Nuclear factor NF-kappa-B p50 subunit). Phosphorylation at Ser-910 primes p105 for proteolytic processing in response to TNF-alpha stimulation. Phosphorylation at Ser-926, Ser-930 and Ser-935 are required for BTRC/BTRCP-mediated ubiquitination and proteolysis. Phosphorylation at Ser-930 is also required for ubiquitination by the KPC complex and limited processing to generate NF-kappa-B p50 (Nuclear factor NF-kappa-B p50 subunit). Post-translationally, polyubiquitinated at multiple Lys residues in the C-terminus. Polyubiquitinated by the SCF(FBXW11) and SCF(BTRC) complexes following phosphorylation at Ser-926, Ser-930 and Ser-935, leading to its complete degradation. In contrast, polyubiquitination by the KPC complex following phosphorylation at Ser-930 leads to limited proteosomal processing and generation of the active NF-kappa-B p50 (Nuclear factor NF-kappa-B p50 subunit). In terms of processing, S-nitrosylation of Cys-59 affects DNA binding. The covalent modification of cysteine by 15-deoxy-Delta12,14-prostaglandin-J2 is autocatalytic and reversible. It may occur as an alternative to other cysteine modifications, such as S-nitrosylation and S-palmitoylation.

Its subcellular location is the cytoplasm. The protein resides in the nucleus. In terms of biological role, NF-kappa-B is a pleiotropic transcription factor present in almost all cell types and is the endpoint of a series of signal transduction events that are initiated by a vast array of stimuli related to many biological processes such as inflammation, immunity, differentiation, cell growth, tumorigenesis and apoptosis. NF-kappa-B is a homo- or heterodimeric complex formed by the Rel-like domain-containing proteins RELA/p65, RELB, NFKB1/p105, NFKB1/p50, REL and NFKB2/p52 and the heterodimeric p65-p50 complex appears to be most abundant one. The dimers bind at kappa-B sites in the DNA of their target genes and the individual dimers have distinct preferences for different kappa-B sites that they can bind with distinguishable affinity and specificity. Different dimer combinations act as transcriptional activators or repressors, respectively. NF-kappa-B is controlled by various mechanisms of post-translational modification and subcellular compartmentalization as well as by interactions with other cofactors or corepressors. NF-kappa-B complexes are held in the cytoplasm in an inactive state complexed with members of the NF-kappa-B inhibitor (I-kappa-B) family. In a conventional activation pathway, I-kappa-B is phosphorylated by I-kappa-B kinases (IKKs) in response to different activators, subsequently degraded thus liberating the active NF-kappa-B complex which translocates to the nucleus. NF-kappa-B heterodimeric p65-p50 and RelB-p50 complexes are transcriptional activators. The NF-kappa-B p50-p50 homodimer is a transcriptional repressor, but can act as a transcriptional activator when associated with BCL3. NFKB1 appears to have dual functions such as cytoplasmic retention of attached NF-kappa-B proteins by p105 and generation of p50 by a cotranslational processing. The proteasome-mediated process ensures the production of both p50 and p105 and preserves their independent function, although processing of NFKB1/p105 also appears to occur post-translationally. p50 binds to the kappa-B consensus sequence 5'-GGRNNYYCC-3', located in the enhancer region of genes involved in immune response and acute phase reactions. Plays a role in the regulation of apoptosis. In a complex with MAP3K8, NFKB1/p105 represses MAP3K8-induced MAPK signaling; active MAP3K8 is released by proteasome-dependent degradation of NFKB1/p105. Functionally, P105 is the precursor of the active p50 subunit (Nuclear factor NF-kappa-B p50 subunit) of the nuclear factor NF-kappa-B. Acts as a cytoplasmic retention of attached NF-kappa-B proteins by p105. Constitutes the active form, which associates with RELA/p65 to form the NF-kappa-B p65-p50 complex to form a transcription factor. Together with RELA/p65, binds to the kappa-B consensus sequence 5'-GGRNNYYCC-3', located in the enhancer region of genes involved in immune response and acute phase reactions. Its function is as follows. Isoform 3 (p98) (but not p84 or p105) acts as a transactivator of NF-kappa-B-regulated gene expression. In terms of biological role, acts as an inhibitor of transactivation of p50 NF-kappa-B subunit, probably by sequestering it in the cytoplasm. This Mus musculus (Mouse) protein is Nuclear factor NF-kappa-B p105 subunit (Nfkb1).